A 190-amino-acid polypeptide reads, in one-letter code: NADH-ubiquinone oxidoreductase 75 kDa subunit, mitochondrial (190 aa).

Belongs to the complex I 75 kDa subunit family. As to quaternary structure, core subunit of respiratory chain NADH dehydrogenase (Complex I) which is composed of 45 different subunits. This is the largest subunit of complex I and it is a component of the iron-sulfur (IP) fragment of the enzyme. Complex I associates with ubiquinol-cytochrome reductase complex (Complex III) to form supercomplexes. Interacts with MDM2 and AKAP1. [2Fe-2S] cluster serves as cofactor. [4Fe-4S] cluster is required as a cofactor.

It is found in the mitochondrion inner membrane. It carries out the reaction a ubiquinone + NADH + 5 H(+)(in) = a ubiquinol + NAD(+) + 4 H(+)(out). In terms of biological role, core subunit of the mitochondrial membrane respiratory chain NADH dehydrogenase (Complex I) which catalyzes electron transfer from NADH through the respiratory chain, using ubiquinone as an electron acceptor. Essential for catalysing the entry and efficient transfer of electrons within complex I. Plays a key role in the assembly and stability of complex I and participates in the association of complex I with ubiquinol-cytochrome reductase complex (Complex III) to form supercomplexes. The chain is NADH-ubiquinone oxidoreductase 75 kDa subunit, mitochondrial from Mesocricetus auratus (Golden hamster).